Here is a 196-residue protein sequence, read N- to C-terminus: MKVNPNNIELIISAVKEEQYPKTELSEVALSGRSNVGKSTFINSMIGRKNMARTSQQPGKTQTLNFYNIDEQLIFVDVPGYGYAKVSKTQREKFGKMIEEYITKRENLQLVIQLVDLRHDPTQDDILMYNYLKHFDIPTLVICTKEDKIPKGKVQKHIKNIKTQLDMDPDDTIVSYSSIQNNKQQQIWNLIEPYIS.

Residues 24 to 196 form the EngB-type G domain; sequence ELSEVALSGR…IWNLIEPYIS (173 aa). GTP-binding positions include 32–39, 59–63, 77–80, 144–147, and 176–178; these read GRSNVGKS, GKTQT, DVPG, TKED, and YSS. The Mg(2+) site is built by Ser39 and Thr61.

It belongs to the TRAFAC class TrmE-Era-EngA-EngB-Septin-like GTPase superfamily. EngB GTPase family. It depends on Mg(2+) as a cofactor.

Its function is as follows. Necessary for normal cell division and for the maintenance of normal septation. The protein is Probable GTP-binding protein EngB of Staphylococcus aureus (strain MW2).